Here is a 339-residue protein sequence, read N- to C-terminus: DNA-directed RNA polymerase subunit alpha (339 aa).

Residues 1 to 235 (MVIQRNWQSL…DQLQLFINFE (235 aa)) are alpha N-terminal domain (alpha-NTD). The tract at residues 251 to 339 (FNRNLLRKVD…DLAKRLEEPF (89 aa)) is alpha C-terminal domain (alpha-CTD).

This sequence belongs to the RNA polymerase alpha chain family. Homodimer. The RNAP catalytic core consists of 2 alpha, 1 beta, 1 beta' and 1 omega subunit. When a sigma factor is associated with the core the holoenzyme is formed, which can initiate transcription.

The catalysed reaction is RNA(n) + a ribonucleoside 5'-triphosphate = RNA(n+1) + diphosphate. Functionally, DNA-dependent RNA polymerase catalyzes the transcription of DNA into RNA using the four ribonucleoside triphosphates as substrates. The protein is DNA-directed RNA polymerase subunit alpha of Granulibacter bethesdensis (strain ATCC BAA-1260 / CGDNIH1).